The primary structure comprises 293 residues: MNFVTTLTYLLPHRMLSSLARHIAYCQHPLIKQWLIDTVIAKFDVNLSEAAEPDAHAYPSFNAFFTRSLKAGIRLPDPNPDTLLMPADGRISQLGPIREGRIFQAKGQSFTATELLGDTAAASAFTNGLFATVYLSPRDYHRVHMPCTGQLLKTVHVPGRLFSVGPDAVRQIPRLFARNERLVCHFDTAFGPMVLVMVGALLVSGVETVWGGVEIPAYGDRITHKDYQGRNIAIERFAEMARFNYGSTVIVLLPPNVFTLAPHLTAESPVTLGQALAHRLSLNHSTQAPTQEK.

Catalysis depends on charge relay system; for autoendoproteolytic cleavage activity residues aspartate 88, histidine 144, and serine 247. Residue serine 247 is the Schiff-base intermediate with substrate; via pyruvic acid; for decarboxylase activity of the active site. Serine 247 carries the post-translational modification Pyruvic acid (Ser); by autocatalysis.

This sequence belongs to the phosphatidylserine decarboxylase family. PSD-B subfamily. Prokaryotic type I sub-subfamily. Heterodimer of a large membrane-associated beta subunit and a small pyruvoyl-containing alpha subunit. Requires pyruvate as cofactor. Post-translationally, is synthesized initially as an inactive proenzyme. Formation of the active enzyme involves a self-maturation process in which the active site pyruvoyl group is generated from an internal serine residue via an autocatalytic post-translational modification. Two non-identical subunits are generated from the proenzyme in this reaction, and the pyruvate is formed at the N-terminus of the alpha chain, which is derived from the carboxyl end of the proenzyme. The autoendoproteolytic cleavage occurs by a canonical serine protease mechanism, in which the side chain hydroxyl group of the serine supplies its oxygen atom to form the C-terminus of the beta chain, while the remainder of the serine residue undergoes an oxidative deamination to produce ammonia and the pyruvoyl prosthetic group on the alpha chain. During this reaction, the Ser that is part of the protease active site of the proenzyme becomes the pyruvoyl prosthetic group, which constitutes an essential element of the active site of the mature decarboxylase.

Its subcellular location is the cell membrane. It carries out the reaction a 1,2-diacyl-sn-glycero-3-phospho-L-serine + H(+) = a 1,2-diacyl-sn-glycero-3-phosphoethanolamine + CO2. It functions in the pathway phospholipid metabolism; phosphatidylethanolamine biosynthesis; phosphatidylethanolamine from CDP-diacylglycerol: step 2/2. In terms of biological role, catalyzes the formation of phosphatidylethanolamine (PtdEtn) from phosphatidylserine (PtdSer). This Xylella fastidiosa (strain M12) protein is Phosphatidylserine decarboxylase proenzyme.